Consider the following 408-residue polypeptide: 2-acyl-4-prenylphloroglucinol 6-prenyltransferase, chloroplastic (408 aa).

Residues 1 to 46 constitute a chloroplast transit peptide; sequence MELSSACNLSLKPNYYYYPTSLFPSNNSYNNLKASSYYQTQRPIKC. 9 helical membrane-spanning segments follow: residues 119-139, 146-166, 193-213, 217-237, 257-277, 281-301, 326-346, 355-375, and 388-408; these read PIPFVAVSIICTSLFGAELLK, WQLMFDAFQGLVVILLYHIYI, SVKSAWFLTIFSAVASLLLMI, CGLFLTCMYCCYLVIGAMYSV, IGIGINFLINYASRATLGLPF, PPFTFIIGFVSTLSIILSILK, IVLVGSGFFLLNYVAAIGVAI, YIMIPAHAIFASALIFKTWLL, and YYHFLWFLMIAEYILYPFIST.

Belongs to the UbiA prenyltransferase family. Homo- and heteromer. Interacts with PT1L, forming a functional metabolon. Mg(2+) serves as cofactor. As to expression, expressed in trichomes.

The protein localises to the plastid. The protein resides in the chloroplast membrane. The enzyme catalyses a 2-acyl-4-prenylphloroglucinol + dimethylallyl diphosphate = a 2-acyl-4,6-diprenylphloroglucinol + diphosphate. It carries out the reaction a 2-acyl-4,6-diprenylphloroglucinol + dimethylallyl diphosphate = a 2-acyl-4,6,6-triprenylphloroglucinol + diphosphate. It functions in the pathway secondary metabolite biosynthesis. Its function is as follows. Involved in the biosynthesis of prenylated phenolics natural products which contribute to the bitter taste of beer and display broad biological activities. Catalyzes the two last prenylation steps in the beta-bitter acid pathway. Uses dimethylallyl diphosphate (DMAPP) as the prenyl donor. In Humulus lupulus (European hop), this protein is 2-acyl-4-prenylphloroglucinol 6-prenyltransferase, chloroplastic.